Consider the following 458-residue polypeptide: Ammonium transporter Rh type B (458 aa).

At 1-13 (MAGSPSRAAGRRL) the chain is on the cytoplasmic side. A helical membrane pass occupies residues 14–34 (QLPLLCLFLQGATAVLFAVFV). Topologically, residues 35 to 61 (RYNHKTDAALWHRSNHSNADNEFYFRY) are extracellular. N-linked (GlcNAc...) asparagine glycosylation is present at Asn-49. Residues 62–82 (PSFQDVHAMVFVGFGFLMVFL) form a helical membrane-spanning segment. Residues 83 to 86 (QRYG) are Cytoplasmic-facing. A helical transmembrane segment spans residues 87–107 (FSSVGFTFLLAAFALQWSTLV). Over 108 to 124 (QGFLHSFHGGHIHVGVE) the chain is Extracellular. The helical transmembrane segment at 125-145 (SMINADFCAGAVLISFGAVLG) threads the bilayer. At 146 to 149 (KTGP) the chain is on the cytoplasmic side. A helical transmembrane segment spans residues 150–170 (TQLLLMALLEVVLFGINEFVL). At 171–178 (LHLLGVRD) the chain is on the extracellular side. Residues 179 to 201 (AGGSMTIHTFGAYFGLVLSRVLY) form a helical membrane-spanning segment. Residues 202 to 219 (RPQLEKSKHRQGSVYHSD) lie on the Cytoplasmic side of the membrane. The helical transmembrane segment at 220-240 (LFAMIGTIFLWIFWPSFNAAL) threads the bilayer. The Extracellular portion of the chain corresponds to 241–251 (TALGAGQHRTA). The chain crosses the membrane as a helical span at residues 252–272 (LNTYYSLAASTLGTFALSALV). The Cytoplasmic portion of the chain corresponds to 273-282 (GEDGRLDMVH). The helical transmembrane segment at 283–303 (IQNAALAGGVVVGTSSEMMLT) threads the bilayer. Residue Pro-304 is a topological domain, extracellular. A helical membrane pass occupies residues 305 to 325 (FGALAAGFLAGTVSTLGYKFF). Residues 326 to 346 (TPILESKFKVQDTCGVHNLHG) lie on the Cytoplasmic side of the membrane. The chain crosses the membrane as a helical span at residues 347-367 (MPGVLGALLGVLVAGLATHEA). Topologically, residues 368–393 (YGDGLESVFPLIAEGQRSATSQAMHQ) are extracellular. The helical transmembrane segment at 394-414 (LFGLFVTLMFASVGGGLGGLL) threads the bilayer. Residues 415 to 458 (LKLPFLDSPPDSQHYEDQVHWQVPGEHEDKAQRPLRVEEADTQA) lie on the Cytoplasmic side of the membrane. Residues 416–424 (KLPFLDSPP) form an interaction with ANK3 region. Residues 436–458 (QVPGEHEDKAQRPLRVEEADTQA) are disordered.

Belongs to the ammonium transporter (TC 2.A.49) family. Rh subfamily. Interacts (via C-terminus) with ANK2 and ANK3; required for targeting to the basolateral membrane. In terms of processing, N-glycosylated. As to expression, specifically expressed in kidney. Also detected in liver and ovary.

It localises to the cell membrane. The protein localises to the basolateral cell membrane. The catalysed reaction is NH4(+)(in) = NH4(+)(out). It catalyses the reaction methylamine(out) = methylamine(in). It carries out the reaction CO2(out) = CO2(in). In terms of biological role, ammonium transporter involved in the maintenance of acid-base homeostasis. Transports ammonium and its related derivative methylammonium across the basolateral plasma membrane of epithelial cells likely contributing to renal transepithelial ammonia transport and ammonia metabolism. May transport either NH4(+) or NH3 ammonia species predominantly mediating an electrogenic NH4(+) transport. May act as a CO2 channel providing for renal acid secretion. This Homo sapiens (Human) protein is Ammonium transporter Rh type B.